A 69-amino-acid chain; its full sequence is Beta-defensin 11 (69 aa).

The first 23 residues, 1–23 (MRTLCSLLLIGCLLFSYDTPVVG), serve as a signal peptide directing secretion. Intrachain disulfides connect C35-C64, C42-C57, and C47-C65.

Belongs to the beta-defensin family.

The protein resides in the secreted. Functionally, has antibacterial activity. The protein is Beta-defensin 11 (Defb11) of Rattus norvegicus (Rat).